The sequence spans 510 residues: Inositol-3-phosphate synthase (510 aa).

Positions 70, 71, 72, 73, 143, 180, 190, 193, 230, 231, 232, 233, 281, 282, 306, 309, 340, 341, 342, 355, 393, 394, 422, and 423 each coordinate NAD(+).

It belongs to the myo-inositol 1-phosphate synthase family. NAD(+) is required as a cofactor.

Its subcellular location is the cytoplasm. The protein localises to the cytosol. It localises to the nucleus. The enzyme catalyses D-glucose 6-phosphate = 1D-myo-inositol 3-phosphate. Its pathway is polyol metabolism; myo-inositol biosynthesis; myo-inositol from D-glucose 6-phosphate: step 1/2. Its function is as follows. Key enzyme in myo-inositol biosynthesis pathway that catalyzes the conversion of glucose 6-phosphate to 1-myo-inositol 1-phosphate in a NAD-dependent manner. The sequence is that of Inositol-3-phosphate synthase from Brassica napus (Rape).